A 410-amino-acid polypeptide reads, in one-letter code: Protein CNPPD1 (410 aa).

The helical transmembrane segment at 233-253 (CLLAVAYVSSVALAVASVAVI) threads the bilayer.

The protein belongs to the CNPPD1 family.

It is found in the membrane. In Homo sapiens (Human), this protein is Protein CNPPD1 (CNPPD1).